A 215-amino-acid polypeptide reads, in one-letter code: Peptide methionine sulfoxide reductase MsrA (215 aa).

Residue Cys-58 is part of the active site.

This sequence belongs to the MsrA Met sulfoxide reductase family.

The enzyme catalyses L-methionyl-[protein] + [thioredoxin]-disulfide + H2O = L-methionyl-(S)-S-oxide-[protein] + [thioredoxin]-dithiol. It catalyses the reaction [thioredoxin]-disulfide + L-methionine + H2O = L-methionine (S)-S-oxide + [thioredoxin]-dithiol. Has an important function as a repair enzyme for proteins that have been inactivated by oxidation. Catalyzes the reversible oxidation-reduction of methionine sulfoxide in proteins to methionine. This is Peptide methionine sulfoxide reductase MsrA from Pseudomonas aeruginosa (strain LESB58).